A 472-amino-acid chain; its full sequence is Cysteine--tRNA ligase (472 aa).

Residue Cys27 participates in Zn(2+) binding. The 'HIGH' region signature appears at 29 to 39 (PTVYNLIHIGN). Cys214, His239, and Glu243 together coordinate Zn(2+). A 'KMSKS' region motif is present at residues 271–275 (KMSKS). Residue Lys274 coordinates ATP.

This sequence belongs to the class-I aminoacyl-tRNA synthetase family. In terms of assembly, monomer. Zn(2+) is required as a cofactor.

It localises to the cytoplasm. The enzyme catalyses tRNA(Cys) + L-cysteine + ATP = L-cysteinyl-tRNA(Cys) + AMP + diphosphate. In Lachnospira eligens (strain ATCC 27750 / DSM 3376 / VPI C15-48 / C15-B4) (Eubacterium eligens), this protein is Cysteine--tRNA ligase.